The following is a 339-amino-acid chain: NADPH dehydrogenase (339 aa).

21–24 (PPMC) contributes to the FMN binding site. Tyr26 contacts substrate. FMN contacts are provided by Ala57 and Gln99. Residue 162–165 (HGAH) participates in substrate binding. FMN is bound by residues Arg215 and 307–308 (GR).

The protein belongs to the NADH:flavin oxidoreductase/NADH oxidase family. NamA subfamily. Homotetramer. FMN is required as a cofactor.

The catalysed reaction is A + NADPH + H(+) = AH2 + NADP(+). Catalyzes the reduction of the double bond of an array of alpha,beta-unsaturated aldehydes and ketones. It also reduces the nitro group of nitroester and nitroaromatic compounds. It could have a role in detoxification processes. In Clostridium acetobutylicum (strain ATCC 824 / DSM 792 / JCM 1419 / IAM 19013 / LMG 5710 / NBRC 13948 / NRRL B-527 / VKM B-1787 / 2291 / W), this protein is NADPH dehydrogenase.